Here is a 163-residue protein sequence, read N- to C-terminus: CASP-like protein 1C2 (163 aa).

Over 1–7 the chain is Cytoplasmic; it reads MAKLHRL. A helical transmembrane segment spans residues 8 to 28; the sequence is ISAVLRLAAAGAAAAAAVIMV. Residues 29-50 are Extracellular-facing; sequence TSHETTSLFGIEMEAKYSYTPS. A helical membrane pass occupies residues 51–71; that stretch reads FVFFVVAFAVTFAYSLLAAVL. Residues 72–80 lie on the Cytoplasmic side of the membrane; that stretch reads VRPGTTASR. Residues 81-101 traverse the membrane as a helical segment; that stretch reads LVLLSDVTVGMLLTGAVAATG. Topologically, residues 102-129 are extracellular; that stretch reads AISQVGKSGNEHAGWLPICAQVQAYCGH. A helical membrane pass occupies residues 130–150; the sequence is VMGALIAGFVSLLLYFLIIMY. Residues 151-163 lie on the Cytoplasmic side of the membrane; that stretch reads SLHAVAEPLCSCH.

Belongs to the Casparian strip membrane proteins (CASP) family. Homodimer and heterodimers.

The protein localises to the cell membrane. The sequence is that of CASP-like protein 1C2 from Zea mays (Maize).